Reading from the N-terminus, the 307-residue chain is N-acetylglucosaminyl-diphospho-decaprenol L-rhamnosyltransferase (307 aa).

This sequence belongs to the glycosyltransferase 2 family. The cofactor is Mn(2+). It depends on Mg(2+) as a cofactor.

It catalyses the reaction N-acetyl-alpha-D-glucosaminyl-1-diphospho-trans,octa-cis-decaprenol + dTDP-beta-L-rhamnose = alpha-L-rhamnosyl-(1-&gt;3)-N-acetyl-alpha-D-glucosaminyl-diphospho-trans,octa-cis-decaprenol + dTDP + H(+). Involved in the biosynthesis of the mycolylarabinogalactan-peptidoglycan (mAGP) complex, an essential component of the mycobacterial cell wall. Catalyzes the transfer of the rhamnosyl moiety from dTDP-rhamnosyl (dTDP-Rha) onto the decaprenyl-pyrophosphoryl-GlcNAc (C50-PP-GlcNAc), yielding rhamnosyl-decaprenyl-pyrophosphoryl-GlcNAc (Rha-C50-PP-GlcNAc). The polypeptide is N-acetylglucosaminyl-diphospho-decaprenol L-rhamnosyltransferase (wbbL) (Mycobacterium tuberculosis (strain CDC 1551 / Oshkosh)).